The sequence spans 1132 residues: DNA-directed RNA polymerase I subunit RPA2 (1132 aa).

The C4-type zinc-finger motif lies at 1067–1098 (CMDCGSLLSPLLEKPPPNWSATRHRKTICLLC).

Belongs to the RNA polymerase beta chain family. In terms of assembly, component of the RNA polymerase I (Pol I) complex consisting of at least 13 subunits.

The protein resides in the nucleus. Its subcellular location is the nucleolus. It is found in the chromosome. The catalysed reaction is RNA(n) + a ribonucleoside 5'-triphosphate = RNA(n+1) + diphosphate. In terms of biological role, DNA-dependent RNA polymerase catalyzes the transcription of DNA into RNA using the four ribonucleoside triphosphates as substrates. Second largest core component of RNA polymerase I which synthesizes ribosomal RNA precursors. Proposed to contribute to the polymerase catalytic activity and forms the polymerase active center together with the largest subunit. Pol I is composed of mobile elements and RPA2 is part of the core element with the central large cleft and probably a clamp element that moves to open and close the cleft. The chain is DNA-directed RNA polymerase I subunit RPA2 (polr1b) from Danio rerio (Zebrafish).